A 141-amino-acid polypeptide reads, in one-letter code: Large ribosomal subunit protein uL11 (141 aa).

Belongs to the universal ribosomal protein uL11 family. As to quaternary structure, part of the ribosomal stalk of the 50S ribosomal subunit. Interacts with L10 and the large rRNA to form the base of the stalk. L10 forms an elongated spine to which L12 dimers bind in a sequential fashion forming a multimeric L10(L12)X complex. In terms of processing, one or more lysine residues are methylated.

Its function is as follows. Forms part of the ribosomal stalk which helps the ribosome interact with GTP-bound translation factors. This is Large ribosomal subunit protein uL11 from Synechocystis sp. (strain ATCC 27184 / PCC 6803 / Kazusa).